The primary structure comprises 101 residues: Putative septation protein SpoVG (101 aa).

The protein belongs to the SpoVG family.

Its function is as follows. Could be involved in septation. The chain is Putative septation protein SpoVG from Anaeromyxobacter dehalogenans (strain 2CP-C).